The primary structure comprises 1482 residues: Calcium-dependent protein kinase 6 (1482 aa).

Disordered stretches follow at residues 250–320 (TNNY…IRPN) and 739–760 (SENF…DDSN). Positions 254–264 (AHDNNQDSNSY) are enriched in polar residues. The span at 277–301 (EEDNDTGDTYADNEEDEDNRDDNDD) shows a compositional bias: acidic residues. Residues 302-318 (YSQYNQCEVESDTNQIR) show a composition bias toward polar residues. Over residues 739-748 (SENFSNNFND) the composition is skewed to low complexity. Residues 749–760 (NKQKSLKNDDSN) are compositionally biased toward basic and acidic residues. 2 EF-hand domains span residues 931–966 (IFER…LCYN) and 972–1007 (VDKK…LLKQ). Positions 985, 987, 989, 991, and 996 each coordinate Ca(2+). In terms of domain architecture, Protein kinase spans 1043–1295 (LSFKKILGCG…AAVLLHHPWF (253 aa)). ATP is bound by residues 1049-1057 (LGCGAFGEV) and Lys1072. The active-site Proton acceptor is the Asp1162. EF-hand domains follow at residues 1338 to 1373 (NHVK…AGVK), 1376 to 1406 (DINR…RWKN), 1407 to 1442 (IDST…NGVN), and 1468 to 1482 (KISF…LSTF). Residues Asp1351, Asn1353, Asn1355, Ser1357, and Glu1362 each coordinate Ca(2+). Asp1420, Asp1422, Asp1424, Tyr1426, and Asp1431 together coordinate Ca(2+).

It belongs to the protein kinase superfamily. Ser/Thr protein kinase family. CDPK subfamily. It depends on Mg(2+) as a cofactor.

It catalyses the reaction L-seryl-[protein] + ATP = O-phospho-L-seryl-[protein] + ADP + H(+). It carries out the reaction L-threonyl-[protein] + ATP = O-phospho-L-threonyl-[protein] + ADP + H(+). Activated by calcium. In terms of biological role, calcium-dependent protein kinase which acts as a sensor and effector of intracellular Ca(2+) levels. In sporozoites, probably involved in the secretion of the cysteine protease that cleaves circumsporozoite protein CSP, thereby exposing CSP TSR domain, which binds with high affinity to highly sulfated heparan sulfate proteoglycans (HSPGs), resulting in productive invasion of the host hepatocytes. This chain is Calcium-dependent protein kinase 6, found in Plasmodium berghei (strain Anka).